The chain runs to 419 residues: Delta(8)-fatty-acid desaturase (419 aa).

One can recognise a Cytochrome b5 heme-binding domain in the interval 1 to 64 (MKSKRQALSP…LKRMPKINPS (64 aa)). 2 residues coordinate heme: His-24 and His-47. Residues 110 to 130 (LGVLGYFLMVQYQMYFIGAVL) traverse the membrane as a helical segment. A Histidine box-1 motif is present at residues 143–147 (HDICH). A helical membrane pass occupies residues 156-176 (WNNLVGLVFGNGLQGFSVTCW). Residues 180–184 (HNAHH) carry the Histidine box-2 motif. The next 3 helical transmembrane spans lie at 226–246 (YFLVICILLRFIWCFQCVLTV), 266–286 (IGLALHWTLKALFHLFFMPSI), and 290–310 (LLVFFVSELVGGFGIAIVVFM). The Histidine box-3 signature appears at 355–359 (QIEHH).

It belongs to the fatty acid desaturase type 1 family. It depends on Fe cation as a cofactor.

The protein localises to the membrane. It catalyses the reaction an (11Z,14Z)-icosadienoyl-containing glycerolipid + 2 Fe(II)-[cytochrome b5] + O2 + 2 H(+) = an (8Z,11Z,14Z)-icosatrienoyl-containing glycerolipid + 2 Fe(III)-[cytochrome b5] + 2 H2O. It carries out the reaction an (11Z,14Z,17Z)-icosatrienoyl-containing glycerolipid + 2 Fe(II)-[cytochrome b5] + O2 + 2 H(+) = an (8Z,11Z,14Z,17Z)-eicosatetraenoyl-containing glycerolipid + 2 Fe(III)-[cytochrome b5] + 2 H2O. The enzyme catalyses an (11Z)-eicosenoyl-containing glycerolipid + 2 Fe(II)-[cytochrome b5] + O2 + 2 H(+) = a (8Z,11Z)-eicosadienoyl-containing glycerolipid + 2 Fe(III)-[cytochrome b5] + 2 H2O. Its pathway is lipid metabolism; fatty acid metabolism. In terms of biological role, delta(8)-fatty-acid desaturase which introduces a double bond at the 8-position in 20-carbon chain length fatty acids (C20) that have an existing delta-11 unsaturation (double bond). Whether it acts on CoA-linked substrates (as in animals) or phospholipid-linked substrates (as in plants and fungi) is still not clear. This Euglena gracilis protein is Delta(8)-fatty-acid desaturase (efd1).